The sequence spans 255 residues: 5'-nucleotidase SurE (255 aa).

Residues Asp7, Asp8, Ser38, and Asn90 each coordinate a divalent metal cation.

Belongs to the SurE nucleotidase family. A divalent metal cation is required as a cofactor.

The protein resides in the cytoplasm. The enzyme catalyses a ribonucleoside 5'-phosphate + H2O = a ribonucleoside + phosphate. Its function is as follows. Nucleotidase that shows phosphatase activity on nucleoside 5'-monophosphates. This chain is 5'-nucleotidase SurE, found in Picrophilus torridus (strain ATCC 700027 / DSM 9790 / JCM 10055 / NBRC 100828 / KAW 2/3).